We begin with the raw amino-acid sequence, 353 residues long: F-box protein At2g14290 (353 aa).

An F-box domain is found at 6 to 58 (PRTWSELPPDLLGSIFHRLSFTDFHRAKIVCWNWNLSSKLTVPKKIRSPWLML).

In Arabidopsis thaliana (Mouse-ear cress), this protein is F-box protein At2g14290.